The chain runs to 174 residues: Ribosome maturation factor RimP (174 aa).

The protein belongs to the RimP family.

The protein localises to the cytoplasm. In terms of biological role, required for maturation of 30S ribosomal subunits. The polypeptide is Ribosome maturation factor RimP (Acinetobacter baumannii (strain SDF)).